A 777-amino-acid chain; its full sequence is Zinc finger FYVE domain-containing protein 1 (777 aa).

The required for localization in the lipid droplets stretch occupies residues 416-777 (MAHSSFFPDE…FNCNKKPGDL (362 aa)). FYVE-type zinc fingers lie at residues 598–659 (NSQI…DARN) and 715–775 (DHEI…KKPG). Residues Cys604, Cys607, Cys620, Cys623, Cys628, Cys631, Cys651, Cys654, Cys721, Cys724, Cys737, Cys740, Cys745, Cys748, Cys767, and Cys770 each contribute to the Zn(2+) site.

Interacts with RAB18 (in GTP-bound form). Interacts with BSCL2 in a RAB18-dependent manner. Interacts with ZW10. Ubiquitous.

The protein localises to the golgi apparatus. The protein resides in the golgi stack. Its subcellular location is the endoplasmic reticulum. It is found in the preautophagosomal structure. It localises to the lipid droplet. The protein localises to the mitochondrion. Its function is as follows. Plays a role in the formation of lipid droplets (LDs) which are storage organelles at the center of lipid and energy homeostasis. Regulates the morphology, size and distribution of LDs. Mediates the formation of endoplasmic reticulum-lipid droplets (ER-LD) contact sites by forming a complex with RAB18 and ZW10. Binds to phosphatidylinositol 3-phosphate (PtdIns3P) through FYVE-type zinc finger. The polypeptide is Zinc finger FYVE domain-containing protein 1 (Zfyve1) (Mus musculus (Mouse)).